The sequence spans 216 residues: Elongation factor Ts (216 aa).

The segment at 81-84 (TDFV) is involved in Mg(2+) ion dislocation from EF-Tu.

It belongs to the EF-Ts family.

The protein localises to the cytoplasm. In terms of biological role, associates with the EF-Tu.GDP complex and induces the exchange of GDP to GTP. It remains bound to the aminoacyl-tRNA.EF-Tu.GTP complex up to the GTP hydrolysis stage on the ribosome. The sequence is that of Elongation factor Ts from Citrifermentans bemidjiense (strain ATCC BAA-1014 / DSM 16622 / JCM 12645 / Bem) (Geobacter bemidjiensis).